The primary structure comprises 409 residues: Sperm equatorial segment protein 1 (409 aa).

Residues methionine 1–leucine 18 form the signal peptide. N-linked (GlcNAc...) asparagine glycosylation is present at asparagine 132. Residues glutamate 141–threonine 223 are disordered. Residues proline 167–proline 177 show a composition bias toward acidic residues. A compositionally biased stretch (polar residues) spans asparagine 198–serine 208. The span at threonine 209–threonine 223 shows a compositional bias: low complexity.

This sequence belongs to the SPESP1 family. Glycosylated. In testis there are two predominant forms of 77- and 67-kDa and a form of 47-kDa, whereas in epididymal sperm from caput, corpus, and cauda there are two forms of 47- and 43-kDa. Testis forms contain complex carbohydrate residues. Epididymal sperm forms are N-glycosylated. Then undergoes significant glycosylation in the testis and that the majority of these glycoconjugates are removed by the time sperm reach the caput epididymis.

The protein resides in the cytoplasmic vesicle. Its subcellular location is the secretory vesicle. The protein localises to the acrosome. Involved in fertilization ability of sperm. This is Sperm equatorial segment protein 1 from Rattus norvegicus (Rat).